We begin with the raw amino-acid sequence, 456 residues long: GPI-anchored protein 13 (456 aa).

The first 23 residues, 1–23 (MRSPSLAVAATTVLGLFSSSALA), serve as a signal peptide directing secretion. Residue Asn27 is glycosylated (N-linked (GlcNAc...) asparagine). The GPI-anchor amidated glycine moiety is linked to residue Gly433. The propeptide at 434 to 456 (AAAVNVVPTTAFGLFAIILASIF) is removed in mature form.

The GPI-anchor is attached to the protein in the endoplasmic reticulum and serves to target the protein to the cell surface. There, the glucosamine-inositol phospholipid moiety is cleaved off and the GPI-modified mannoprotein is covalently attached via its lipidless GPI glycan remnant to the 1,6-beta-glucan of the outer cell wall layer.

Its subcellular location is the secreted. The protein resides in the cell wall. It is found in the membrane. Cell wall protein which contributes to cell wall synthesis and is important for acquiring normal surface properties. Required for virulence in a mouse infection model. The sequence is that of GPI-anchored protein 13 (PGA13) from Candida albicans (strain SC5314 / ATCC MYA-2876) (Yeast).